The chain runs to 356 residues: Phosphoribosyl pyrophosphate synthase-associated protein 1 (356 aa).

The residue at position 1 (methionine 1) is an N-acetylmethionine. 2 positions are modified to phosphoserine: serine 177 and serine 215.

This sequence belongs to the ribose-phosphate pyrophosphokinase family. As to quaternary structure, binds to PRPS1 and PRPS2.

Seems to play a negative regulatory role in 5-phosphoribose 1-diphosphate synthesis. In Bos taurus (Bovine), this protein is Phosphoribosyl pyrophosphate synthase-associated protein 1 (PRPSAP1).